A 362-amino-acid chain; its full sequence is Spermidine/putrescine import ATP-binding protein PotA (362 aa).

Residues 6 to 236 (VELKHVGKRY…PVNHFVADFI (231 aa)) enclose the ABC transporter domain. Residue 38–45 (GPSGSGKT) coordinates ATP.

Belongs to the ABC transporter superfamily. Spermidine/putrescine importer (TC 3.A.1.11.1) family. The complex is composed of two ATP-binding proteins (PotA), two transmembrane proteins (PotB and PotC) and a solute-binding protein (PotD).

It localises to the cell membrane. It catalyses the reaction ATP + H2O + polyamine-[polyamine-binding protein]Side 1 = ADP + phosphate + polyamineSide 2 + [polyamine-binding protein]Side 1.. Part of the ABC transporter complex PotABCD involved in spermidine/putrescine import. Responsible for energy coupling to the transport system. This Lacticaseibacillus paracasei (strain ATCC 334 / BCRC 17002 / CCUG 31169 / CIP 107868 / KCTC 3260 / NRRL B-441) (Lactobacillus paracasei) protein is Spermidine/putrescine import ATP-binding protein PotA.